We begin with the raw amino-acid sequence, 209 residues long: Ion-translocating oxidoreductase complex subunit G (209 aa).

The Cytoplasmic portion of the chain corresponds to 1-8 (MLTAIRKN). Residues 9 to 29 (GLILAVFACVSTGLVALTYAL) traverse the membrane as a helical segment. Over 30–209 (TAEQIQQQEQ…HNQPNPCEGQ (180 aa)) the chain is Periplasmic. The residue at position 175 (Thr175) is an FMN phosphoryl threonine.

This sequence belongs to the RnfG family. As to quaternary structure, the complex is composed of six subunits: RnfA, RnfB, RnfC, RnfD, RnfE and RnfG. FMN is required as a cofactor.

The protein localises to the cell inner membrane. In terms of biological role, part of a membrane-bound complex that couples electron transfer with translocation of ions across the membrane. This chain is Ion-translocating oxidoreductase complex subunit G, found in Vibrio cholerae serotype O1 (strain ATCC 39541 / Classical Ogawa 395 / O395).